The chain runs to 382 residues: Threonine synthase (382 aa).

Lys-93 is modified (N6-(pyridoxal phosphate)lysine). Pyridoxal 5'-phosphate contacts are provided by residues Asn-119, Gly-219–Asn-223, and Thr-347.

The protein belongs to the threonine synthase family. Requires pyridoxal 5'-phosphate as cofactor.

It carries out the reaction O-phospho-L-homoserine + H2O = L-threonine + phosphate. It functions in the pathway amino-acid biosynthesis; L-threonine biosynthesis; L-threonine from L-aspartate: step 5/5. Catalyzes the gamma-elimination of phosphate from L-phosphohomoserine and the beta-addition of water to produce L-threonine. The chain is Threonine synthase (thrC) from Synechocystis sp. (strain ATCC 27184 / PCC 6803 / Kazusa).